We begin with the raw amino-acid sequence, 372 residues long: Non-structural protein NS2 (372 aa).

The segment at 259–326 (NQIEKQHTTH…QESEPESPSF (68 aa)) is disordered. A compositionally biased stretch (low complexity) spans 299 to 309 (TETTSTSSSHH).

This Aedes albopictus (Asian tiger mosquito) protein is Non-structural protein NS2 (NS).